Consider the following 345-residue polypeptide: UbiA prenyltransferase domain-containing protein 1 (345 aa).

Transmembrane regions (helical) follow at residues 60 to 80 (LALR…GTAI), 90 to 110 (LLLF…GNLV), 141 to 161 (VRFG…LYFI), 169 to 189 (LALI…GIGF), 213 to 233 (AVQV…LALS), 251 to 273 (QAGI…YNLL), 285 to 305 (ATRY…AFSL), and 324 to 344 (LNLL…AGSL).

Belongs to the UbiA prenyltransferase family.

The protein resides in the endoplasmic reticulum membrane. Its subcellular location is the golgi apparatus membrane. It is found in the mitochondrion membrane. It catalyses the reaction menadiol + (2E,6E,10E)-geranylgeranyl diphosphate = menaquinol-4 + diphosphate. It carries out the reaction all-trans-decaprenyl diphosphate + 4-hydroxybenzoate = 4-hydroxy-3-(all-trans-decaprenyl)benzoate + diphosphate. It participates in quinol/quinone metabolism; menaquinone biosynthesis. The protein operates within cofactor biosynthesis; ubiquinone biosynthesis. Functionally, prenyltransferase that mediates the formation of menaquinone-4 (MK-4) and coenzyme Q10. MK-4 is a vitamin K2 isoform required for endothelial cell development. Mediates the conversion of phylloquinone (PK) into MK-4, probably by cleaving the side chain of phylloquinone (PK) to release 2-methyl-1,4-naphthoquinone (menadione; K3) and then prenylating it with geranylgeranyl pyrophosphate (GGPP) to form MK-4. Also plays a role in cardiovascular development independently of MK-4 biosynthesis, by acting as a coenzyme Q10 biosynthetic enzyme: coenzyme Q10, also named ubiquinone, plays an important antioxidant role in the cardiovascular system. Mediates biosynthesis of coenzyme Q10 in the Golgi membrane, leading to protect cardiovascular tissues from NOS3/eNOS-dependent oxidative stress. The chain is UbiA prenyltransferase domain-containing protein 1 (ubiad1) from Xenopus tropicalis (Western clawed frog).